A 277-amino-acid chain; its full sequence is 3-methyl-2-oxobutanoate hydroxymethyltransferase (277 aa).

Mg(2+) contacts are provided by Asp-53 and Asp-96. 3-methyl-2-oxobutanoate contacts are provided by residues 53 to 54, Asp-96, and Lys-126; that span reads DS. Glu-128 provides a ligand contact to Mg(2+). Glu-195 functions as the Proton acceptor in the catalytic mechanism.

The protein belongs to the PanB family. Homodecamer; pentamer of dimers. Requires Mg(2+) as cofactor.

Its subcellular location is the cytoplasm. The catalysed reaction is 3-methyl-2-oxobutanoate + (6R)-5,10-methylene-5,6,7,8-tetrahydrofolate + H2O = 2-dehydropantoate + (6S)-5,6,7,8-tetrahydrofolate. It functions in the pathway cofactor biosynthesis; (R)-pantothenate biosynthesis; (R)-pantoate from 3-methyl-2-oxobutanoate: step 1/2. Its function is as follows. Catalyzes the reversible reaction in which hydroxymethyl group from 5,10-methylenetetrahydrofolate is transferred onto alpha-ketoisovalerate to form ketopantoate. This chain is 3-methyl-2-oxobutanoate hydroxymethyltransferase, found in Prosthecochloris aestuarii (strain DSM 271 / SK 413).